The following is a 122-amino-acid chain: MAKISRKLQTQKRHKRLRRYLIGNKIRPRLAVFRSNNHIYAQVIDDDAQQTICSASTVDKELKEDSDKLSPNCSSSTIVGKLLAKRAIKKGIKQVIFDRGGNLYHGRVKALADAARDAGLNF.

This sequence belongs to the universal ribosomal protein uL18 family. In terms of assembly, part of the 50S ribosomal subunit; part of the 5S rRNA/L5/L18/L25 subcomplex. Contacts the 5S and 23S rRNAs.

This is one of the proteins that bind and probably mediate the attachment of the 5S RNA into the large ribosomal subunit, where it forms part of the central protuberance. The sequence is that of Large ribosomal subunit protein uL18 from Prochlorococcus marinus (strain MIT 9515).